We begin with the raw amino-acid sequence, 85 residues long: Conotoxin Lt28.3 (85 aa).

The signal sequence occupies residues 1–21 (MPKLEMMLLVLLILPLCYIDA). Residues 22 to 40 (VGPLPPWNMEDEIIEHWQK) constitute a propeptide that is removed on maturation.

This sequence belongs to the conotoxin D superfamily. Post-translationally, contains 5 disulfide bonds. Expressed by the venom duct.

It is found in the secreted. Functionally, probable neurotoxin. This chain is Conotoxin Lt28.3, found in Conus litteratus (Lettered cone).